Here is a 1574-residue protein sequence, read N- to C-terminus: DNA-directed RNA polymerase subunit beta' (1574 aa).

The Zn(2+) site is built by cysteine 64, cysteine 66, cysteine 79, and cysteine 82. Aspartate 590, aspartate 592, and aspartate 594 together coordinate Mg(2+). Positions 928, 1002, 1009, and 1012 each coordinate Zn(2+).

It belongs to the RNA polymerase beta' chain family. In terms of assembly, the RNAP catalytic core consists of 2 alpha, 1 beta, 1 beta' and 1 omega subunit. When a sigma factor is associated with the core the holoenzyme is formed, which can initiate transcription. The cofactor is Mg(2+). Zn(2+) is required as a cofactor.

The catalysed reaction is RNA(n) + a ribonucleoside 5'-triphosphate = RNA(n+1) + diphosphate. In terms of biological role, DNA-dependent RNA polymerase catalyzes the transcription of DNA into RNA using the four ribonucleoside triphosphates as substrates. The protein is DNA-directed RNA polymerase subunit beta' of Aquifex aeolicus (strain VF5).